A 389-amino-acid polypeptide reads, in one-letter code: Adenylyltransferase and sulfurtransferase uba4 (389 aa).

Residues G40, D61, 68 to 72 (SNLHR), K85, and 129 to 130 (DT) each bind ATP. Residues C171 and C174 each contribute to the Zn(2+) site. Catalysis depends on C188, which acts as the Glycyl thioester intermediate; for adenylyltransferase activity. Residues C252 and C255 each coordinate Zn(2+). The region spanning 298–387 (AQRAPYLVDV…WSRQIDPNFP (90 aa)) is the Rhodanese domain. C347 serves as the catalytic Cysteine persulfide intermediate.

In the N-terminal section; belongs to the HesA/MoeB/ThiF family. UBA4 subfamily. The cofactor is Zn(2+).

It localises to the cytoplasm. The protein resides in the cytosol. It carries out the reaction [molybdopterin-synthase sulfur-carrier protein]-C-terminal Gly-Gly + ATP + H(+) = [molybdopterin-synthase sulfur-carrier protein]-C-terminal Gly-Gly-AMP + diphosphate. It catalyses the reaction [molybdopterin-synthase sulfur-carrier protein]-C-terminal Gly-Gly-AMP + S-sulfanyl-L-cysteinyl-[cysteine desulfurase] + AH2 = [molybdopterin-synthase sulfur-carrier protein]-C-terminal-Gly-aminoethanethioate + L-cysteinyl-[cysteine desulfurase] + A + AMP + 2 H(+). Its pathway is tRNA modification; 5-methoxycarbonylmethyl-2-thiouridine-tRNA biosynthesis. It participates in cofactor biosynthesis; molybdopterin biosynthesis. In terms of biological role, plays a central role in 2-thiolation of mcm(5)S(2)U at tRNA wobble positions of cytosolic tRNA(Lys), tRNA(Glu) and tRNA(Gln). Also essential during biosynthesis of the molybdenum cofactor. Acts by mediating the C-terminal thiocarboxylation of sulfur carriers URM1 and CNX5/MOCS2A. Its N-terminus first activates urm1 and mocs2a as acyl-adenylates (-COAMP), then the persulfide sulfur on the catalytic cysteine is transferred to URM1 and CNX5/MOCS2A to form thiocarboxylation (-COSH) of their C-terminus. The reaction probably involves hydrogen sulfide that is generated from the persulfide intermediate and that acts as a nucleophile towards URM1 and CNX5/MOCS2A. Subsequently, a transient disulfide bond is formed. Does not use thiosulfate as sulfur donor; NFS1 probably acting as a sulfur donor for thiocarboxylation reactions. Required for growth on nitrate as a sole nitrogen source. In Ogataea parapolymorpha (strain ATCC 26012 / BCRC 20466 / JCM 22074 / NRRL Y-7560 / DL-1) (Yeast), this protein is Adenylyltransferase and sulfurtransferase uba4.